Reading from the N-terminus, the 169-residue chain is Ureidoglycolate lyase (169 aa).

This sequence belongs to the ureidoglycolate lyase family. As to quaternary structure, homodimer. It depends on Ni(2+) as a cofactor.

It carries out the reaction (S)-ureidoglycolate = urea + glyoxylate. It functions in the pathway nitrogen metabolism; (S)-allantoin degradation. In terms of biological role, catalyzes the catabolism of the allantoin degradation intermediate (S)-ureidoglycolate, generating urea and glyoxylate. Involved in the utilization of allantoin as nitrogen source. In Brucella anthropi (strain ATCC 49188 / DSM 6882 / CCUG 24695 / JCM 21032 / LMG 3331 / NBRC 15819 / NCTC 12168 / Alc 37) (Ochrobactrum anthropi), this protein is Ureidoglycolate lyase.